The chain runs to 209 residues: Small ribosomal subunit protein uS4 (209 aa).

The 69-residue stretch at arginine 98–glycine 166 folds into the S4 RNA-binding domain.

This sequence belongs to the universal ribosomal protein uS4 family. Part of the 30S ribosomal subunit. Contacts protein S5. The interaction surface between S4 and S5 is involved in control of translational fidelity.

One of the primary rRNA binding proteins, it binds directly to 16S rRNA where it nucleates assembly of the body of the 30S subunit. Its function is as follows. With S5 and S12 plays an important role in translational accuracy. The polypeptide is Small ribosomal subunit protein uS4 (Fervidobacterium nodosum (strain ATCC 35602 / DSM 5306 / Rt17-B1)).